A 235-amino-acid chain; its full sequence is 7-cyano-7-deazaguanine synthase (235 aa).

Residue 9–19 (FSGGQDSTTCL) participates in ATP binding. Zn(2+) is bound by residues Cys197, Cys212, Cys215, and Cys218.

The protein belongs to the QueC family. Zn(2+) serves as cofactor.

The catalysed reaction is 7-carboxy-7-deazaguanine + NH4(+) + ATP = 7-cyano-7-deazaguanine + ADP + phosphate + H2O + H(+). It functions in the pathway purine metabolism; 7-cyano-7-deazaguanine biosynthesis. Catalyzes the ATP-dependent conversion of 7-carboxy-7-deazaguanine (CDG) to 7-cyano-7-deazaguanine (preQ(0)). The protein is 7-cyano-7-deazaguanine synthase of Polaromonas sp. (strain JS666 / ATCC BAA-500).